The sequence spans 180 residues: Crossover junction endodeoxyribonuclease RuvC (180 aa).

Active-site residues include Asp-7, Glu-66, and Asp-138. 3 residues coordinate Mg(2+): Asp-7, Glu-66, and Asp-138.

The protein belongs to the RuvC family. As to quaternary structure, homodimer which binds Holliday junction (HJ) DNA. The HJ becomes 2-fold symmetrical on binding to RuvC with unstacked arms; it has a different conformation from HJ DNA in complex with RuvA. In the full resolvosome a probable DNA-RuvA(4)-RuvB(12)-RuvC(2) complex forms which resolves the HJ. It depends on Mg(2+) as a cofactor.

Its subcellular location is the cytoplasm. The catalysed reaction is Endonucleolytic cleavage at a junction such as a reciprocal single-stranded crossover between two homologous DNA duplexes (Holliday junction).. The RuvA-RuvB-RuvC complex processes Holliday junction (HJ) DNA during genetic recombination and DNA repair. Endonuclease that resolves HJ intermediates. Cleaves cruciform DNA by making single-stranded nicks across the HJ at symmetrical positions within the homologous arms, yielding a 5'-phosphate and a 3'-hydroxyl group; requires a central core of homology in the junction. The consensus cleavage sequence is 5'-(A/T)TT(C/G)-3'. Cleavage occurs on the 3'-side of the TT dinucleotide at the point of strand exchange. HJ branch migration catalyzed by RuvA-RuvB allows RuvC to scan DNA until it finds its consensus sequence, where it cleaves and resolves the cruciform DNA. The protein is Crossover junction endodeoxyribonuclease RuvC of Herminiimonas arsenicoxydans.